The following is a 471-amino-acid chain: Glutamate--tRNA ligase (471 aa).

Residues 9–19 (PSPTGYLHVGG) carry the 'HIGH' region motif. Positions 98, 100, 125, and 127 each coordinate Zn(2+). Residues 237 to 241 (KLSKR) carry the 'KMSKS' region motif. Lys-240 provides a ligand contact to ATP.

The protein belongs to the class-I aminoacyl-tRNA synthetase family. Glutamate--tRNA ligase type 1 subfamily. Monomer. The cofactor is Zn(2+).

It is found in the cytoplasm. The catalysed reaction is tRNA(Glu) + L-glutamate + ATP = L-glutamyl-tRNA(Glu) + AMP + diphosphate. Catalyzes the attachment of glutamate to tRNA(Glu) in a two-step reaction: glutamate is first activated by ATP to form Glu-AMP and then transferred to the acceptor end of tRNA(Glu). The polypeptide is Glutamate--tRNA ligase (Yersinia pseudotuberculosis serotype O:1b (strain IP 31758)).